We begin with the raw amino-acid sequence, 574 residues long: 4-oxocyclohexanecarboxylate 2-dehydrogenase (574 aa).

It belongs to the FAD-dependent oxidoreductase 2 family. As to quaternary structure, monomer. Homodimer. Requires FAD as cofactor.

It carries out the reaction 4-oxocyclohexane-1-carboxylate + O2 = 4-oxocyclohex-2-ene-1-carboxylate + H2O2. Inhibited by 5,5'-dithio-bis(2- nitrobenzoate) and N-bromosuccinimide, but not by thiol and chelating reagents. Desaturase involved in a cyclohexanecarboxylate (CHCA) degradation pathway. Catalyzes the conversion of 4-oxocyclohexanecarboxylate (4-oxoCHCA) to 4-oxocyclohexenecarboxylate. Is highly specific for 4-oxocyclohexanecarboxylic acid and shows only slight activity with 4-oxo-2-methylcyclohex-2-enecarboxylic acid. This chain is 4-oxocyclohexanecarboxylate 2-dehydrogenase, found in Sinomonas cyclohexanicum (Corynebacterium cyclohexanicum).